We begin with the raw amino-acid sequence, 46 residues long: MESTSPALSVSIAVLTALLGLTGFGIYTAFGPPSRQLDDPFDDHDD.

A helical transmembrane segment spans residues 10 to 30 (VSIAVLTALLGLTGFGIYTAF).

This sequence belongs to the PsbN family.

The protein localises to the cellular thylakoid membrane. Its function is as follows. May play a role in photosystem I and II biogenesis. The protein is Protein PsbN of Synechococcus sp. (strain RCC307).